The sequence spans 348 residues: Dehydrogenase orsE (348 aa).

43–46 lines the NADP(+) pocket; the sequence is LDTH. 130 to 137 contacts substrate; it reads FAVEAAVC. Residues 180–183, 203–206, and 272–273 each bind NADP(+); these read SSSV, GAHN, and VH. 292–296 lines the substrate pocket; it reads NDIAT. Residue 339 to 340 coordinates NADP(+); it reads VS.

Belongs to the zinc-containing alcohol dehydrogenase family. Monomer.

In terms of biological role, dehydrogenase; part of the gene cluster that mediates the biosynthesis of orsellinic acid, as well as of the cathepsin K inhibitors F9775 A and F9775 B. The non-reducing polyketide synthase orsA produces orsellinic acid by condensing acetyl-CoA with 3 malonyl-CoA units. Further modifications by the decarboxylase orsB and the tyrosinase-like protein orsC lead to the production of F9775 A and F9775 B. The functions of orsD and orsE remain unclear since only orsB and orsC are required to convert orsellinic acid into F9775 A and F9775 B. The sequence is that of Dehydrogenase orsE from Emericella nidulans (strain FGSC A4 / ATCC 38163 / CBS 112.46 / NRRL 194 / M139) (Aspergillus nidulans).